We begin with the raw amino-acid sequence, 1023 residues long: FHIP family protein AGAP011705 (1023 aa).

Composition is skewed to polar residues over residues 1–13 (MSWL…RQSF), 806–825 (SMTS…SSSY), and 868–888 (GLNH…ASMN). 2 disordered regions span residues 1–39 (MSWL…AGGG) and 797–927 (GKLL…AETQ). Positions 889-906 (VPSPVGQQQHQHQSVSSV) are enriched in low complexity.

Belongs to the FHIP family.

The chain is FHIP family protein AGAP011705 from Anopheles gambiae (African malaria mosquito).